The sequence spans 292 residues: MSKGKLIKGIAGFYYVEVNKEVYECKGRGILRKKKLTPLVGDYVEITVTDEDNKKGMIDDIFPRKTELIRPTVANVDQVIVVFSVTQPDPHLSLLDHFLILAETQNIDVVICLNKLDLVQREDVAELVGIYEKVGYPVILTSQNDSIGLEQLEKVLRGKTTVFAGPSGVGKSTLLNRILPHVTLQTGELSSKIARGKHTTRHVELISLETEGWVVDTPGFSSLNIDFLKEEELADYFIDFEPFAKDCRFLSCVHLNEPICGVKTALKAGQLVQSRYNSYLQMIGEIKKNRRY.

One can recognise a CP-type G domain in the interval 65–223 (KTELIRPTVA…VVDTPGFSSL (159 aa)). GTP is bound by residues 114 to 117 (NKLD) and 165 to 173 (GPSGVGKST). Cys247, Cys252, His254, and Cys260 together coordinate Zn(2+).

This sequence belongs to the TRAFAC class YlqF/YawG GTPase family. RsgA subfamily. In terms of assembly, monomer. Associates with 30S ribosomal subunit, binds 16S rRNA. The cofactor is Zn(2+).

It localises to the cytoplasm. In terms of biological role, one of several proteins that assist in the late maturation steps of the functional core of the 30S ribosomal subunit. Helps release RbfA from mature subunits. May play a role in the assembly of ribosomal proteins into the subunit. Circularly permuted GTPase that catalyzes slow GTP hydrolysis, GTPase activity is stimulated by the 30S ribosomal subunit. In Alkaliphilus metalliredigens (strain QYMF), this protein is Small ribosomal subunit biogenesis GTPase RsgA.